A 380-amino-acid chain; its full sequence is Crotonobetainyl-CoA reductase (380 aa).

Belongs to the acyl-CoA dehydrogenase family. Homotetramer. The cofactor is FAD.

The protein resides in the cytoplasm. It catalyses the reaction 4-(trimethylamino)butanoyl-CoA + oxidized [electron-transfer flavoprotein] + H(+) = crotonobetainyl-CoA + reduced [electron-transfer flavoprotein]. It participates in amine and polyamine metabolism; carnitine metabolism. In terms of biological role, catalyzes the reduction of crotonobetainyl-CoA to gamma-butyrobetainyl-CoA. The sequence is that of Crotonobetainyl-CoA reductase from Citrobacter koseri (strain ATCC BAA-895 / CDC 4225-83 / SGSC4696).